Here is a 477-residue protein sequence, read N- to C-terminus: Glycogen synthase (477 aa).

K15 is an ADP-alpha-D-glucose binding site.

Belongs to the glycosyltransferase 1 family. Bacterial/plant glycogen synthase subfamily.

The enzyme catalyses [(1-&gt;4)-alpha-D-glucosyl](n) + ADP-alpha-D-glucose = [(1-&gt;4)-alpha-D-glucosyl](n+1) + ADP + H(+). It functions in the pathway glycan biosynthesis; glycogen biosynthesis. Synthesizes alpha-1,4-glucan chains using ADP-glucose. The polypeptide is Glycogen synthase (Escherichia coli O139:H28 (strain E24377A / ETEC)).